The sequence spans 386 residues: O-methyltransferase aunE (386 aa).

W200 is a binding site for S-adenosyl-L-methionine. The active-site Proton acceptor is H299.

This sequence belongs to the class I-like SAM-binding methyltransferase superfamily. Cation-independent O-methyltransferase family.

It participates in secondary metabolite biosynthesis. O-methyltransferase; part of the gene cluster that mediates the biosynthesis of aurasperone B, a dimeric gamma-naphthopyrone. The first step in the biosynthesis of aurasperone B is the production of gamma-naphthopyrone precursor YWA1 by the non-reducing polyketide synthase albA, via condensation of one acetyl-CoA starter unit with 6 malonyl-CoA units. YWA1 is then methylated by aunE at position C-6 to yield foncesin which is further methylated at position C-8 by aunD to produce fonsecin B. A key enzyme in the biosynthetic pathway is the cytochrome P450 monooxygenase aunB which catalyzes the oxidative dimerization of fonsecin B to aurasperone B. AunB also catalyzes the oxidative dimerization of rubrofusarin B into aurasperone A. The sequence is that of O-methyltransferase aunE from Aspergillus niger (strain ATCC MYA-4892 / CBS 513.88 / FGSC A1513).